The following is a 607-amino-acid chain: Glutamine--fructose-6-phosphate aminotransferase [isomerizing] (607 aa).

C2 serves as the catalytic Nucleophile; for GATase activity. The Glutamine amidotransferase type-2 domain maps to 2 to 217; sequence CGIIGIIGND…DGDWAVLTRN (216 aa). SIS domains lie at 283-422 and 455-597; these read IGID…ARGA and VCHD…VDQP. Catalysis depends on K602, which acts as the For Fru-6P isomerization activity.

Homodimer.

The protein resides in the cytoplasm. The catalysed reaction is D-fructose 6-phosphate + L-glutamine = D-glucosamine 6-phosphate + L-glutamate. In terms of biological role, catalyzes the first step in hexosamine metabolism, converting fructose-6P into glucosamine-6P using glutamine as a nitrogen source. In Brucella abortus biovar 1 (strain 9-941), this protein is Glutamine--fructose-6-phosphate aminotransferase [isomerizing].